A 197-amino-acid polypeptide reads, in one-letter code: MTQGPNYRIKFRRRREGKTDYYTRYTYVINNAIRFVPRLTNKYVIVSVSKFDQKGDIMIAYAHSIELVKKYGWKGDTNNTPAAYLTGYLAGLRAVKSGVKAAVSDIGLFVPVKGGRIFAVIKGAIDAGLKVPVGDLGKLKDRVNGSHISAYAQKLKNENQELYNKLFSSYIQRGLDPVLLPQHFEEVLNKIKENGGK.

This sequence belongs to the universal ribosomal protein uL18 family. In terms of assembly, part of the 50S ribosomal subunit. Contacts the 5S and 23S rRNAs.

In terms of biological role, this is one of the proteins that bind and probably mediate the attachment of the 5S RNA into the large ribosomal subunit, where it forms part of the central protuberance. This is Large ribosomal subunit protein uL18 from Sulfolobus acidocaldarius (strain ATCC 33909 / DSM 639 / JCM 8929 / NBRC 15157 / NCIMB 11770).